The primary structure comprises 296 residues: Ribosomal RNA small subunit methyltransferase A (296 aa).

6 residues coordinate S-adenosyl-L-methionine: N30, L32, G57, E78, D103, and N128.

It belongs to the class I-like SAM-binding methyltransferase superfamily. rRNA adenine N(6)-methyltransferase family. RsmA subfamily.

It localises to the cytoplasm. It catalyses the reaction adenosine(1518)/adenosine(1519) in 16S rRNA + 4 S-adenosyl-L-methionine = N(6)-dimethyladenosine(1518)/N(6)-dimethyladenosine(1519) in 16S rRNA + 4 S-adenosyl-L-homocysteine + 4 H(+). Specifically dimethylates two adjacent adenosines (A1518 and A1519) in the loop of a conserved hairpin near the 3'-end of 16S rRNA in the 30S particle. May play a critical role in biogenesis of 30S subunits. The polypeptide is Ribosomal RNA small subunit methyltransferase A (Staphylococcus carnosus (strain TM300)).